A 149-amino-acid polypeptide reads, in one-letter code: Large ribosomal subunit protein bL9 (149 aa).

The protein belongs to the bacterial ribosomal protein bL9 family.

Functionally, binds to the 23S rRNA. The polypeptide is Large ribosomal subunit protein bL9 (Magnetococcus marinus (strain ATCC BAA-1437 / JCM 17883 / MC-1)).